The following is a 1058-amino-acid chain: Probable plasma membrane ATPase (1058 aa).

Residues 1 to 29 show a composition bias toward polar residues; sequence MDNNQIPKNSPESSAINSAESSPKSNVSS. The segment at 1-123 is disordered; the sequence is MDNNQIPKNS…SSSGKKEEDY (123 aa). Residues 1-212 are Cytoplasmic-facing; the sequence is MDNNQIPKNS…DVKRYPILEF (212 aa). Residues 31–40 are compositionally biased toward basic and acidic residues; that stretch reads VLHENHHKEQ. Positions 41–66 are enriched in low complexity; the sequence is QQLQQQLQQEQQQQQLPTTPQSEPTQ. Positions 96–111 are enriched in polar residues; sequence SLKTISGYPSSKNTEA. The chain crosses the membrane as a helical span at residues 213 to 232; sequence LYFMWNPLSWTMEVAAIVSI. The Extracellular segment spans residues 233–237; sequence ALLDW. A helical membrane pass occupies residues 238–258; the sequence is VDFILICALLLLNATIGFIEE. Residues 259–387 are Cytoplasmic-facing; that stretch reads NTAGNAVEAL…GHLQVILRNI (129 aa). Residues 388–407 form a helical membrane-spanning segment; sequence GLFCISFIAIWVLVELLVDF. Residues 408 to 425 are Extracellular-facing; sequence LGYDGYCHGVGGGRCLPL. The chain crosses the membrane as a helical span at residues 426 to 447; the sequence is NNALVLLVGGIPIAMPTVLSVT. The Cytoplasmic segment spans residues 448–783; the sequence is MAIGATQLSK…SSRKIFQRMR (336 aa). Catalysis depends on D480, which acts as the 4-aspartylphosphate intermediate. Residues D728 and D732 each coordinate Mg(2+). Residues 784 to 805 form a helical membrane-spanning segment; the sequence is NYVIYSVAATVRICTTFGILTV. Residues 806-810 are Extracellular-facing; the sequence is AWNFK. The chain crosses the membrane as a helical span at residues 811–833; it reads FPTIATVIIAILNDGTMLTISKD. The Cytoplasmic segment spans residues 834-849; it reads RVRARNEPDQWNLFEV. The chain crosses the membrane as a helical span at residues 850 to 870; sequence FTMALCYGFYLVGSTIVFFAI. Residues 871–889 are Extracellular-facing; that stretch reads IHDGTWFHDAINLRILTDN. A helical transmembrane segment spans residues 890–910; the sequence is ELRGLIYLQVSISGLATIFVS. Residues 911-922 are Cytoplasmic-facing; sequence RSQGFSYFERPG. The chain crosses the membrane as a helical span at residues 923 to 943; it reads NLVIFAFVMSQIVATFIGVYG. Topologically, residues 944–967 are extracellular; the sequence is FRGYPHDSFSDNPDYPVHGTNFQG. Residues 968 to 988 traverse the membrane as a helical segment; that stretch reads CGWGWAVCAWIWCFLWYIPMD. Residues 989 to 1058 are Cytoplasmic-facing; sequence FIKLGVTYIL…HKSVVTDNKV (70 aa).

It belongs to the cation transport ATPase (P-type) (TC 3.A.3) family. Type IIIA subfamily.

The protein resides in the cell membrane. The catalysed reaction is ATP + H2O + H(+)(in) = ADP + phosphate + 2 H(+)(out). Its activity is regulated as follows. Acid pH levels increase its ATPase activity. In terms of biological role, P-type plasma membrane H+-ATPase (proton pump). The proton gradient it generates drives the active transport of nutrients by H(+) symport. The resulting external acidification and/or internal alkinization may mediate growth responses. This Dictyostelium discoideum (Social amoeba) protein is Probable plasma membrane ATPase (patB).